Reading from the N-terminus, the 502-residue chain is Cytochrome P450 3A40 (502 aa).

Cys443 is a heme binding site.

It belongs to the cytochrome P450 family. The cofactor is heme.

The protein resides in the endoplasmic reticulum membrane. It is found in the microsome membrane. The catalysed reaction is an organic molecule + reduced [NADPH--hemoprotein reductase] + O2 = an alcohol + oxidized [NADPH--hemoprotein reductase] + H2O + H(+). This chain is Cytochrome P450 3A40 (cyp3a40), found in Oryzias latipes (Japanese rice fish).